Here is a 690-residue protein sequence, read N- to C-terminus: Methionine--tRNA ligase 1 (690 aa).

The short motif at P11–H21 is the 'HIGH' region element. Residues C142, C145, C155, and C158 each contribute to the Zn(2+) site. The short motif at K328–S332 is the 'KMSKS' region element. K331 is a binding site for ATP. A tRNA-binding domain is found at D590–H690.

The protein belongs to the class-I aminoacyl-tRNA synthetase family. MetG type 1 subfamily. As to quaternary structure, homodimer. Zn(2+) is required as a cofactor.

It is found in the cytoplasm. The enzyme catalyses tRNA(Met) + L-methionine + ATP = L-methionyl-tRNA(Met) + AMP + diphosphate. Is required not only for elongation of protein synthesis but also for the initiation of all mRNA translation through initiator tRNA(fMet) aminoacylation. This is Methionine--tRNA ligase 1 from Sorangium cellulosum (strain So ce56) (Polyangium cellulosum (strain So ce56)).